Reading from the N-terminus, the 254-residue chain is Probable phosphatase Sbal223_2880 (254 aa).

Residues histidine 8, histidine 10, histidine 16, histidine 41, glutamate 74, histidine 102, histidine 132, aspartate 193, and histidine 195 each contribute to the Zn(2+) site.

It belongs to the PHP family. The cofactor is Zn(2+).

This is Probable phosphatase Sbal223_2880 from Shewanella baltica (strain OS223).